The chain runs to 147 residues: Methylglyoxal synthase (147 aa).

The 144-residue stretch at 4–147 (VSVPATKRIA…LLNFELLCES (144 aa)) folds into the MGS-like domain. Residues histidine 17, lysine 21, 43–46 (TGTT), and 63–64 (SG) each bind substrate. Aspartate 69 serves as the catalytic Proton donor/acceptor. Histidine 96 lines the substrate pocket.

Belongs to the methylglyoxal synthase family.

It catalyses the reaction dihydroxyacetone phosphate = methylglyoxal + phosphate. Functionally, catalyzes the formation of methylglyoxal from dihydroxyacetone phosphate. This chain is Methylglyoxal synthase, found in Leptospira borgpetersenii serovar Hardjo-bovis (strain JB197).